A 397-amino-acid polypeptide reads, in one-letter code: Phosphoglycerate kinase (397 aa).

Substrate-binding positions include 25–27, R41, 64–67, R118, and R151; these read DLN and HLGR. Residues K202, E324, and 350 to 353 contribute to the ATP site; that span reads GGDT.

The protein belongs to the phosphoglycerate kinase family. In terms of assembly, monomer.

It localises to the cytoplasm. It catalyses the reaction (2R)-3-phosphoglycerate + ATP = (2R)-3-phospho-glyceroyl phosphate + ADP. The protein operates within carbohydrate degradation; glycolysis; pyruvate from D-glyceraldehyde 3-phosphate: step 2/5. This is Phosphoglycerate kinase from Acidovorax ebreus (strain TPSY) (Diaphorobacter sp. (strain TPSY)).